Consider the following 389-residue polypeptide: Pyruvylated Gal-beta-1,3-epitope synthesis protein 2 (389 aa).

At 1 to 16 the chain is on the cytoplasmic side; it reads MTKLWVNFFSQKLLRL. The chain crosses the membrane as a helical span at residues 17 to 37; it reads LIPSIIVVFAFAALFAIYSPI. The Lumenal portion of the chain corresponds to 38–389; that stretch reads QLGGINFYKR…WSNSFDLITA (352 aa).

The protein resides in the endoplasmic reticulum membrane. It is found in the golgi apparatus membrane. Its function is as follows. Involved in cell wall biogenesis. Has a role in the addition of Gal-beta1,3 moeities to galactomannans and their subsequent pyruvylation. Has a role in meiosis. This Schizosaccharomyces pombe (strain 972 / ATCC 24843) (Fission yeast) protein is Pyruvylated Gal-beta-1,3-epitope synthesis protein 2 (pvg2).